Here is a 192-residue protein sequence, read N- to C-terminus: MNHLTNQYVMLHDEKRCIGCQACTVACKVLNDVPEGFSRVQVQIRAPEQASNALTHFQFVRVSCQHCENAPCVSVCPTGASYRDENGIVQVDKSRCIGCDYCVAACPFHVRYLNPQTGVADKCNFCADTRLAAGQSPACVSVCPTDALKFGRLDESEIQRWVGQKEVYRQQEARSGAVSLYRRKEVHQEGKA.

4Fe-4S ferredoxin-type domains are found at residues 8–36, 55–86, and 87–116; these read YVMLHDEKRCIGCQACTVACKVLNDVPEG, THFQFVRVSCQHCENAPCVSVCPTGASYRDEN, and GIVQVDKSRCIGCDYCVAACPFHVRYLNPQ. Positions 17, 20, 23, 27, 64, 67, 72, 76, 96, 99, 102, 106, 123, 126, 139, and 143 each coordinate [4Fe-4S] cluster.

In terms of assembly, composed of three subunits: PhsA, PhsB and PhsC. It depends on [4Fe-4S] cluster as a cofactor.

It is found in the cell inner membrane. Its function is as follows. Component of the PhsABC thiosulfate reductase that catalyzes the reduction of thiosulfate to sulfite and hydrogen sulfide, with menaquinol as the sole electron donor. Proton motive force (PMF) is required to drive transmembrane electron transfer within the reductase. The PhsB subunit transfers electrons between PhsC and PhsA. The sequence is that of Thiosulfate reductase electron transfer subunit PhsB (phsB) from Salmonella typhi.